Here is a 424-residue protein sequence, read N- to C-terminus: Transcription regulator spe-44 (424 aa).

The 86-residue stretch at 65–150 (PLQITIPEGD…RTHMEAMTID (86 aa)) folds into the SAND domain. Disordered stretches follow at residues 178–228 (ARKS…KPRQ) and 371–394 (EHSV…AREF). A compositionally biased stretch (basic and acidic residues) spans 192-210 (YEIENEMAGKEADNDDNRK). Residues 378–388 (PRTSSSSQESL) show a composition bias toward polar residues.

It localises to the chromosome. The protein resides in the nucleus. Transcription factor which controls spermatogenesis and sperm cell fate by regulation of sperm gene expression. The polypeptide is Transcription regulator spe-44 (Caenorhabditis elegans).